A 194-amino-acid chain; its full sequence is MSMLRRPLTQLELCEDDIQWLTDQLNKRVLPAVIVPKCEMMDIDEMEPMDQSEPPRGITRRNLRSADRKNRDVPGPSTGECTRTSIAPTLTSARTPVAAPTLTLSTPVNPVSSAEMLRVMPPRVGRRPRASRSGDNDSPLLFNAYDTPQQGINDESPTPSDSPESPNAHLYGATPGNPTSTSGGPSSNTRSHRH.

A disordered region spans residues 47-194 (EPMDQSEPPR…PSSNTRSHRH (148 aa)). 2 stretches are compositionally biased toward polar residues: residues 79–94 (GECT…TSAR) and 102–112 (LTLSTPVNPVS). Composition is skewed to low complexity over residues 154-166 (DESP…PESP) and 174-194 (TPGN…SHRH).

It belongs to the CDC26 family. The APC/C complex is probably composed of at least 12 subunits: apc-2, apc-10, apc-11, cdc-26, emb-1, emb-27, emb-30, mat-1, mat-2, mat-3, such-1 and gfi-3.

The protein localises to the nucleus. It participates in protein modification; protein ubiquitination. Its function is as follows. Probable component of the anaphase promoting complex/cyclosome (APC/C), a cell cycle-regulated E3 ubiquitin ligase that controls progression through mitosis and the G1 phase of the cell cycle. The APC/C complex acts by mediating ubiquitination and subsequent degradation of target proteins. Developmental role in early embryogenesis and the metaphase to anaphase transition in meiosis and mitosis. Required for embryonic anterior-posterior axis formation. The polypeptide is Anaphase-promoting complex subunit CDC26 (Caenorhabditis elegans).